We begin with the raw amino-acid sequence, 390 residues long: Homeobox protein Hox-B2a (390 aa).

Disordered stretches follow at residues 40–73 (STAI…TASN), 81–100 (TAPP…GAPL), 108–155 (KEKK…LDNV), and 211–338 (MKHK…SLPD). Polar residues predominate over residues 52–73 (PSLSPCTGNQARPRSQKRTASN). The short motif at 103 to 108 (EFPWMK) is the Antp-type hexapeptide element. The segment covering 118–135 (KPGATAAAAAASPSQASS) has biased composition (low complexity). The homeobox DNA-binding region spans 158-217 (SRRLRTAYTNTQLLELEKEFHFNKYLCRPRRVEIAALLDLTERQVKVWFQNRRMKHKRQT). The span at 244-262 (SSQSLEVSGSGSAAPSESE) shows a compositional bias: low complexity. Polar residues predominate over residues 263–290 (TCPTTAAYTNSSDKSQPTPEEGQASQPE).

Belongs to the Antp homeobox family. Proboscipedia subfamily.

It is found in the nucleus. Sequence-specific transcription factor which is part of a developmental regulatory system that provides cells with specific positional identities on the anterior-posterior axis. Plays an important role in the patterning of hindbrain and pharyngeal arches. The protein is Homeobox protein Hox-B2a (hoxb2a) of Danio rerio (Zebrafish).